The following is a 295-amino-acid chain: NAD kinase (295 aa).

Residue aspartate 74 is the Proton acceptor of the active site. Residues aspartate 74–glycine 75, asparagine 148–aspartate 149, histidine 159, arginine 176, aspartate 178, and threonine 189–serine 194 contribute to the NAD(+) site.

The protein belongs to the NAD kinase family. A divalent metal cation serves as cofactor.

Its subcellular location is the cytoplasm. The catalysed reaction is NAD(+) + ATP = ADP + NADP(+) + H(+). Involved in the regulation of the intracellular balance of NAD and NADP, and is a key enzyme in the biosynthesis of NADP. Catalyzes specifically the phosphorylation on 2'-hydroxyl of the adenosine moiety of NAD to yield NADP. This chain is NAD kinase, found in Legionella pneumophila (strain Corby).